Consider the following 325-residue polypeptide: Elongation factor P--(R)-beta-lysine ligase (325 aa).

Substrate is bound at residue 76–78 (SPE). ATP is bound by residues 100–102 (RNE) and Asn109. Tyr118 is a substrate binding site. 244-245 (EL) contributes to the ATP binding site. Residue Glu251 coordinates substrate. Gly300 serves as a coordination point for ATP.

It belongs to the class-II aminoacyl-tRNA synthetase family. EpmA subfamily. In terms of assembly, homodimer.

The enzyme catalyses D-beta-lysine + L-lysyl-[protein] + ATP = N(6)-((3R)-3,6-diaminohexanoyl)-L-lysyl-[protein] + AMP + diphosphate + H(+). In terms of biological role, with EpmB is involved in the beta-lysylation step of the post-translational modification of translation elongation factor P (EF-P). Catalyzes the ATP-dependent activation of (R)-beta-lysine produced by EpmB, forming a lysyl-adenylate, from which the beta-lysyl moiety is then transferred to the epsilon-amino group of a conserved specific lysine residue in EF-P. The polypeptide is Elongation factor P--(R)-beta-lysine ligase (Pectobacterium carotovorum subsp. carotovorum (strain PC1)).